The following is a 216-amino-acid chain: Imidazoleglycerol-phosphate dehydratase (216 aa).

This sequence belongs to the imidazoleglycerol-phosphate dehydratase family.

The protein localises to the cytoplasm. It catalyses the reaction D-erythro-1-(imidazol-4-yl)glycerol 3-phosphate = 3-(imidazol-4-yl)-2-oxopropyl phosphate + H2O. It participates in amino-acid biosynthesis; L-histidine biosynthesis; L-histidine from 5-phospho-alpha-D-ribose 1-diphosphate: step 6/9. This is Imidazoleglycerol-phosphate dehydratase from Nocardia farcinica (strain IFM 10152).